The sequence spans 237 residues: MLTRKQFELLRFINERLKEAGVPPSFDEMKDALDLRSKSGIHRLITALEERGFIRRLPNRARAIEVIKLPEFGINGGGQTRRGFTPSVIEGHLGKVRPHASIGSDEDSHDRNVAVPVMGRIAAGTPIEALQTRSHTISVPPDMLGSGEHYALEVRGDSMVDAGILDGDMALIQKNESADTGDIVVALIDEEEATLKRFRRRGASIALEPANSAYEVRILPPNRVRIQGKLVGLYRKY.

The H-T-H motif DNA-binding region spans 26 to 46 (FDEMKDALDLRSKSGIHRLIT). Catalysis depends on for autocatalytic cleavage activity residues Ser-158 and Lys-196.

Belongs to the peptidase S24 family. In terms of assembly, homodimer.

The enzyme catalyses Hydrolysis of Ala-|-Gly bond in repressor LexA.. In terms of biological role, represses a number of genes involved in the response to DNA damage (SOS response), including recA and lexA. In the presence of single-stranded DNA, RecA interacts with LexA causing an autocatalytic cleavage which disrupts the DNA-binding part of LexA, leading to derepression of the SOS regulon and eventually DNA repair. The sequence is that of LexA repressor from Rhodopseudomonas palustris (strain BisA53).